The primary structure comprises 224 residues: Cytidylate kinase (224 aa).

9–17 (GPSGVGKGT) contributes to the ATP binding site.

The protein belongs to the cytidylate kinase family. Type 1 subfamily.

It is found in the cytoplasm. It carries out the reaction CMP + ATP = CDP + ADP. It catalyses the reaction dCMP + ATP = dCDP + ADP. The protein is Cytidylate kinase of Dichelobacter nodosus (strain VCS1703A).